The chain runs to 320 residues: Malate dehydrogenase (320 aa).

NAD(+) contacts are provided by residues 10-15 (GSGMIG) and D34. Substrate contacts are provided by R83 and R89. Residues N96 and 119 to 121 (ITN) each bind NAD(+). Substrate-binding residues include N121 and R152. H176 serves as the catalytic Proton acceptor.

This sequence belongs to the LDH/MDH superfamily. MDH type 3 family.

It catalyses the reaction (S)-malate + NAD(+) = oxaloacetate + NADH + H(+). Catalyzes the reversible oxidation of malate to oxaloacetate. This is Malate dehydrogenase from Maricaulis maris (strain MCS10) (Caulobacter maris).